Consider the following 801-residue polypeptide: Probable phosphoketolase (801 aa).

Belongs to the XFP family. It depends on thiamine diphosphate as a cofactor.

This is Probable phosphoketolase from Bradyrhizobium diazoefficiens (strain JCM 10833 / BCRC 13528 / IAM 13628 / NBRC 14792 / USDA 110).